Reading from the N-terminus, the 298-residue chain is Inosose dehydratase (298 aa).

Belongs to the IolE/MocC family. Glutathione serves as cofactor. The cofactor is Co(2+). It depends on Mn(2+) as a cofactor.

The enzyme catalyses scyllo-inosose = 3D-3,5/4-trihydroxycyclohexane-1,2-dione + H2O. The protein operates within polyol metabolism; myo-inositol degradation into acetyl-CoA; acetyl-CoA from myo-inositol: step 2/7. Its function is as follows. Catalyzes the dehydration of inosose (2-keto-myo-inositol, 2KMI or 2,4,6/3,5-pentahydroxycyclohexanone) to 3D-(3,5/4)-trihydroxycyclohexane-1,2-dione (D-2,3-diketo-4-deoxy-epi-inositol). This chain is Inosose dehydratase, found in Clostridium tetani (strain Massachusetts / E88).